Reading from the N-terminus, the 259-residue chain is UPF0246 protein PSPPH_1119 (259 aa).

It belongs to the UPF0246 family.

In Pseudomonas savastanoi pv. phaseolicola (strain 1448A / Race 6) (Pseudomonas syringae pv. phaseolicola (strain 1448A / Race 6)), this protein is UPF0246 protein PSPPH_1119.